A 207-amino-acid polypeptide reads, in one-letter code: Ribosomal RNA small subunit methyltransferase G (207 aa).

S-adenosyl-L-methionine contacts are provided by residues Gly-73, Leu-78, 124 to 125, and Arg-139; that span reads VE.

Belongs to the methyltransferase superfamily. RNA methyltransferase RsmG family.

It is found in the cytoplasm. It carries out the reaction guanosine(527) in 16S rRNA + S-adenosyl-L-methionine = N(7)-methylguanosine(527) in 16S rRNA + S-adenosyl-L-homocysteine. In terms of biological role, specifically methylates the N7 position of guanine in position 527 of 16S rRNA. This Escherichia coli O1:K1 / APEC protein is Ribosomal RNA small subunit methyltransferase G.